A 299-amino-acid polypeptide reads, in one-letter code: Oxygen-dependent coproporphyrinogen-III oxidase (299 aa).

S92 is a binding site for substrate. Residues H96 and H106 each coordinate a divalent metal cation. H106 acts as the Proton donor in catalysis. 108–110 (NVR) lines the substrate pocket. A divalent metal cation contacts are provided by H145 and H175. The segment at 240–275 (YVEFNLVWDRGTLFGLQTGGRTESILMSMPPLVRWE) is important for dimerization. Residue 258 to 260 (GGR) coordinates substrate.

Belongs to the aerobic coproporphyrinogen-III oxidase family. In terms of assembly, homodimer. A divalent metal cation is required as a cofactor.

The protein localises to the cytoplasm. It carries out the reaction coproporphyrinogen III + O2 + 2 H(+) = protoporphyrinogen IX + 2 CO2 + 2 H2O. It participates in porphyrin-containing compound metabolism; protoporphyrin-IX biosynthesis; protoporphyrinogen-IX from coproporphyrinogen-III (O2 route): step 1/1. In terms of biological role, involved in the heme biosynthesis. Catalyzes the aerobic oxidative decarboxylation of propionate groups of rings A and B of coproporphyrinogen-III to yield the vinyl groups in protoporphyrinogen-IX. The sequence is that of Oxygen-dependent coproporphyrinogen-III oxidase from Enterobacter sp. (strain 638).